The primary structure comprises 300 residues: Ribosome-inactivating protein 3 (300 aa).

Glu-207 is a catalytic residue.

It belongs to the ribosome-inactivating protein family. Type 1 RIP subfamily. In terms of assembly, monomer. Accumulates to high levels in seeds.

It localises to the cytoplasm. The catalysed reaction is Endohydrolysis of the N-glycosidic bond at one specific adenosine on the 28S rRNA.. In terms of biological role, possesses features of some constitutive defense agent. The coordinate Opaque-2-controlled synthesis of this protein and the major seed storage proteins (zeins) may provide the germinating seedling with both nutritional benefits and protection against pathogen invasion of the surrounding endosperm. The chain is Ribosome-inactivating protein 3 (CRIP3) from Zea mays (Maize).